The sequence spans 177 residues: Protein ParB (177 aa).

The N-terminal stretch at 1–26 (MKRRSYAMLRAAAALAVLVVASPAWA) is a signal peptide. The TNase-like domain occupies 27–157 (ELRGEVVRII…RGKRVGLWSD (131 aa)). Residues Arg53, Glu61, and Arg95 contribute to the active site.

In terms of assembly, monomer. It depends on Ca(2+) as a cofactor. In terms of processing, the N-terminus is blocked.

Its subcellular location is the secreted. Endonuclease activity is inhibited by EDTA. Its function is as follows. Involved in plasmid partition. An endonuclease that acts on supercoiled dsDNA, converting it first to open circular DNA and then linearizing it. Preferentially cleaves regions in dsDNA that are capable of forming ssDNA, such as AT-rich regions and sequences that can form cruciforms. Has poor endonucleolytic activity on linear DNA, has 5'-3' exonuclease activity on dsDNA cleaving generating 3'-phosphonucleotides. The sequence is that of Protein ParB from Escherichia coli.